A 48-amino-acid chain; its full sequence is ATP synthase protein 8 (48 aa).

The helical transmembrane segment at 4-24 (LVPFYFINILSFGFLIFTVLL) threads the bilayer.

Belongs to the ATPase protein 8 family. As to quaternary structure, F-type ATPases have 2 components, CF(1) - the catalytic core - and CF(0) - the membrane proton channel.

It localises to the mitochondrion membrane. In terms of biological role, mitochondrial membrane ATP synthase (F(1)F(0) ATP synthase or Complex V) produces ATP from ADP in the presence of a proton gradient across the membrane which is generated by electron transport complexes of the respiratory chain. F-type ATPases consist of two structural domains, F(1) - containing the extramembraneous catalytic core and F(0) - containing the membrane proton channel, linked together by a central stalk and a peripheral stalk. During catalysis, ATP synthesis in the catalytic domain of F(1) is coupled via a rotary mechanism of the central stalk subunits to proton translocation. Part of the complex F(0) domain. Minor subunit located with subunit a in the membrane. The polypeptide is ATP synthase protein 8 (atp8) (Schizosaccharomyces pombe (strain 972 / ATCC 24843) (Fission yeast)).